Reading from the N-terminus, the 232-residue chain is Cell cycle response regulator CtrA (232 aa).

The Response regulatory domain occupies 2-116 (RVLLIEDDSA…ELIARIHAIV (115 aa)). Position 51 is a 4-aspartylphosphate (Asp51). Residues 124-223 (QSVITTGDLV…VWGRGYVLRE (100 aa)) constitute a DNA-binding region (ompR/PhoB-type).

It is found in the cytoplasm. Essential protein that plays a role in the control of cell division, possibly through the transcriptional regulation of ccrM, rpoD, pleC, minC and ftsZ genes. The chain is Cell cycle response regulator CtrA (ctrA) from Brucella anthropi (strain ATCC 49188 / DSM 6882 / CCUG 24695 / JCM 21032 / LMG 3331 / NBRC 15819 / NCTC 12168 / Alc 37) (Ochrobactrum anthropi).